We begin with the raw amino-acid sequence, 217 residues long: Peptide methionine sulfoxide reductase MsrA (217 aa).

C56 is an active-site residue.

This sequence belongs to the MsrA Met sulfoxide reductase family.

The enzyme catalyses L-methionyl-[protein] + [thioredoxin]-disulfide + H2O = L-methionyl-(S)-S-oxide-[protein] + [thioredoxin]-dithiol. It catalyses the reaction [thioredoxin]-disulfide + L-methionine + H2O = L-methionine (S)-S-oxide + [thioredoxin]-dithiol. In terms of biological role, has an important function as a repair enzyme for proteins that have been inactivated by oxidation. Catalyzes the reversible oxidation-reduction of methionine sulfoxide in proteins to methionine. This Corynebacterium glutamicum (strain ATCC 13032 / DSM 20300 / JCM 1318 / BCRC 11384 / CCUG 27702 / LMG 3730 / NBRC 12168 / NCIMB 10025 / NRRL B-2784 / 534) protein is Peptide methionine sulfoxide reductase MsrA.